The sequence spans 103 residues: Large ribosomal subunit protein bL21 (103 aa).

This sequence belongs to the bacterial ribosomal protein bL21 family. As to quaternary structure, part of the 50S ribosomal subunit. Contacts protein L20.

This protein binds to 23S rRNA in the presence of protein L20. This chain is Large ribosomal subunit protein bL21, found in Aeromonas salmonicida (strain A449).